Reading from the N-terminus, the 224-residue chain is UPF0758 protein CJA_3522 (224 aa).

The MPN domain occupies 102-224; the sequence is LLSSPHLVRD…LVSLAERGWL (123 aa). Zn(2+)-binding residues include His173, His175, and Asp186. Residues 173 to 186 carry the JAMM motif motif; sequence HNHPSGLAEPSQAD.

It belongs to the UPF0758 family.

The protein is UPF0758 protein CJA_3522 of Cellvibrio japonicus (strain Ueda107) (Pseudomonas fluorescens subsp. cellulosa).